The chain runs to 101 residues: MYAIVKTGGKQYKVAEGDLVKVEKIEGEPGASVALTPVLLVDGADVTTAADKLASVSVNTEIVEHTKGPKIKILKYKNKTGYKKRQGHRQKLTVLKVTGIK.

The protein belongs to the bacterial ribosomal protein bL21 family. As to quaternary structure, part of the 50S ribosomal subunit. Contacts protein L20.

This protein binds to 23S rRNA in the presence of protein L20. The protein is Large ribosomal subunit protein bL21 of Corynebacterium efficiens (strain DSM 44549 / YS-314 / AJ 12310 / JCM 11189 / NBRC 100395).